We begin with the raw amino-acid sequence, 813 residues long: Protein mac-1 (813 aa).

Coiled coils occupy residues 58–89 and 122–152; these read VREA…VQEI and SDDS…TVLN. Disordered regions lie at residues 97–131 and 152–193; these read TRKR…ERAA and NLYT…GAVS. The segment covering 158–172 has biased composition (polar residues); sequence SAPSTPVSTPKNQAT. Low complexity predominate over residues 175-191; sequence PPGASAAPPALPRGLGA. ATP contacts are provided by residues 246 to 253 and 575 to 582; these read GPPGCGKT.

Belongs to the AAA ATPase family. As to quaternary structure, found in a complex composed of ced-3, ced-4 and mac-1 or of ced-9, ced-4 and mac-1. Within the complex, interacts with ced-4.

Functionally, probably together with ced-9, plays a modest role in preventing ced-4 and caspase ced-3-mediated apoptosis. The protein is Protein mac-1 of Caenorhabditis elegans.